The primary structure comprises 657 residues: Hemocyanin A chain (657 aa).

The cysteines at positions 93 and 98 are disulfide-linked. A glycan (N-linked (GlcNAc...) asparagine) is linked at asparagine 167. Positions 194, 198, 224, 344, 348, and 384 each coordinate Cu cation. 2 disulfide bridges follow: cysteine 483/cysteine 502 and cysteine 562/cysteine 609. Residues 594–616 (EGHNGGHDYGGTHAQCGVHGEAY) are disordered.

Belongs to the tyrosinase family. Hemocyanin subfamily. In terms of assembly, hexamer of a number of different chains, of which A, B, and C have been identified. Hemolymph.

Its subcellular location is the secreted. The protein localises to the extracellular space. In terms of biological role, hemocyanins are copper-containing oxygen carriers occurring freely dissolved in the hemolymph of many mollusks and arthropods. This chain is Hemocyanin A chain, found in Panulirus interruptus (California spiny lobster).